A 344-amino-acid polypeptide reads, in one-letter code: L-rhamnose-proton symporter (344 aa).

Helical transmembrane passes span 4–24 (AITMGIFWHLIGAASAACFYA), 38–58 (WSVGGIVSWIILPWTISALLL), 68–88 (FSLSTLLPVFLFGAMWGIGNI), 101–121 (MGIGIAIGITLIVGTLMTPII), 137–157 (TLLGVLVALIGVGIVTRAGQL), 175–195 (LVLAVMCGIFSAGMSFAMNAA), 214–234 (LPSYVVIMGGGAIINLGFCFI), 259–279 (VLLSALGGLMWYLQFFFYAWG), 290–310 (ISWMLHMSFYVLCGGIVGLVL), and 323–343 (VLSLGCVVIIVAANIVGIGMA).

It belongs to the L-rhamnose transporter (TC 2.A.7.6) family.

The protein resides in the cell inner membrane. It catalyses the reaction L-rhamnopyranose(in) + H(+)(in) = L-rhamnopyranose(out) + H(+)(out). Functionally, uptake of L-rhamnose across the cytoplasmic membrane with the concomitant transport of protons into the cell (symport system). The polypeptide is L-rhamnose-proton symporter (Shigella sonnei (strain Ss046)).